The chain runs to 85 residues: UPF0386 protein Meso_1721 (85 aa).

The protein belongs to the UPF0386 family.

This chain is UPF0386 protein Meso_1721, found in Chelativorans sp. (strain BNC1).